The chain runs to 166 residues: Large ribosomal subunit protein uL10 (166 aa).

Belongs to the universal ribosomal protein uL10 family. As to quaternary structure, part of the ribosomal stalk of the 50S ribosomal subunit. The N-terminus interacts with L11 and the large rRNA to form the base of the stalk. The C-terminus forms an elongated spine to which L12 dimers bind in a sequential fashion forming a multimeric L10(L12)X complex.

Forms part of the ribosomal stalk, playing a central role in the interaction of the ribosome with GTP-bound translation factors. This Streptococcus gordonii (strain Challis / ATCC 35105 / BCRC 15272 / CH1 / DL1 / V288) protein is Large ribosomal subunit protein uL10.